We begin with the raw amino-acid sequence, 365 residues long: MDNYEFSELLKTLKNKVGNIASIIKPENIQTRLKEIEELENSPSFWSDVKQAGVIGKEKTKITNLLKNYENAFNALNDASELFDLANSENDTETLEALFNDAPKLEDTITSLEISMLLSGENDGKNAIVSIHPGAGGTESNDWASILYRMYLRFCEREGFKVETLDFQEGEEAGLKDVSFLVKGENAYGYLKAENGIHRLVRTSPFDSAGRRHTSFSSVMVSPELDDDIEIEIEEKDIRIDYYRASGAGGQHVNKTESAVRITHFPTGIVVQCQNDRSQHKNKATAFKMLKSRLYELELMKQQDSANTGEKSEIGWGHQIRSYVLFPYQQVKDNRSGEAFSQVDNILDGDIKKMIEGVLISLKAE.

Gln-251 carries the post-translational modification N5-methylglutamine.

Belongs to the prokaryotic/mitochondrial release factor family. In terms of processing, methylated by PrmC. Methylation increases the termination efficiency of RF2.

It localises to the cytoplasm. Its function is as follows. Peptide chain release factor 2 directs the termination of translation in response to the peptide chain termination codons UGA and UAA. The sequence is that of Peptide chain release factor 2 from Campylobacter jejuni (strain RM1221).